Reading from the N-terminus, the 74-residue chain is IGMIVECEKEGYLMEANGCKRSCTLRPGHYCANECSYVKGKNGYCYAWVACYCYNMPDSVKIWDSATNTCGRGK.

The signal sequence occupies residues 1–8 (IGMIVECE). Residues 9–71 (KEGYLMEANG…IWDSATNTCG (63 aa)) form the LCN-type CS-alpha/beta domain. Disulfide bonds link Cys19–Cys70, Cys23–Cys45, Cys31–Cys51, and Cys35–Cys53. An Arginine amide modification is found at Arg72.

It belongs to the long (4 C-C) scorpion toxin superfamily. Sodium channel inhibitor family. Beta subfamily. Expressed by the venom gland.

The protein localises to the secreted. Functionally, beta toxins bind voltage-independently at site-4 of sodium channels (Nav) and shift the voltage of activation toward more negative potentials thereby affecting sodium channel activation and promoting spontaneous and repetitive firing. In Tityus discrepans (Venezuelan scorpion), this protein is Toxin Td6.